We begin with the raw amino-acid sequence, 568 residues long: Urease subunit alpha (568 aa).

Residues 131–568 (GGMDAHIHFI…LPLAQRYFLY (438 aa)) enclose the Urease domain. Ni(2+)-binding residues include His-136, His-138, and Lys-219. Lys-219 is subject to N6-carboxylysine. Substrate is bound at residue His-221. Residues His-248 and His-274 each contribute to the Ni(2+) site. His-322 acts as the Proton donor in catalysis. Residue Asp-362 participates in Ni(2+) binding.

It belongs to the metallo-dependent hydrolases superfamily. Urease alpha subunit family. In terms of assembly, heterotrimer of UreA (gamma), UreB (beta) and UreC (alpha) subunits. Three heterotrimers associate to form the active enzyme. The cofactor is Ni cation. In terms of processing, carboxylation allows a single lysine to coordinate two nickel ions.

It localises to the cytoplasm. The catalysed reaction is urea + 2 H2O + H(+) = hydrogencarbonate + 2 NH4(+). It functions in the pathway nitrogen metabolism; urea degradation; CO(2) and NH(3) from urea (urease route): step 1/1. The polypeptide is Urease subunit alpha (Cereibacter sphaeroides (strain KD131 / KCTC 12085) (Rhodobacter sphaeroides)).